The sequence spans 610 residues: Phosphoprotein 85 (610 aa).

2 disordered regions span residues 462–530 (NEGR…NISD) and 543–610 (EEPM…DARL). Positions 467-478 (SSRASPSHSTST) are enriched in low complexity. Polar residues predominate over residues 484–495 (PQSDRSTPTSIL). Low complexity-rich tracts occupy residues 503–515 (SNSR…FSQE) and 552–567 (SPQS…RQSR). Positions 581–592 (VPSSQTRRQNNA) are enriched in polar residues. Residues 600–610 (RLTEMMNDARL) show a composition bias toward basic and acidic residues.

Belongs to the herpesviridae pp85 family. Post-translationally, phosphorylated.

It localises to the virion tegument. Its subcellular location is the host cytoplasm. The polypeptide is Phosphoprotein 85 (U14) (Homo sapiens (Human)).